A 426-amino-acid polypeptide reads, in one-letter code: D-tagatose-1,6-bisphosphate aldolase subunit KbaZ (426 aa).

The protein belongs to the GatZ/KbaZ family. KbaZ subfamily. As to quaternary structure, forms a complex with KbaY.

The protein operates within carbohydrate metabolism; D-tagatose 6-phosphate degradation; D-glyceraldehyde 3-phosphate and glycerone phosphate from D-tagatose 6-phosphate: step 2/2. Its function is as follows. Component of the tagatose-1,6-bisphosphate aldolase KbaYZ that is required for full activity and stability of the Y subunit. Could have a chaperone-like function for the proper and stable folding of KbaY. When expressed alone, KbaZ does not show any aldolase activity. This is D-tagatose-1,6-bisphosphate aldolase subunit KbaZ from Escherichia coli O139:H28 (strain E24377A / ETEC).